Reading from the N-terminus, the 187-residue chain is Elongation factor P (187 aa).

Belongs to the elongation factor P family.

It is found in the cytoplasm. Its pathway is protein biosynthesis; polypeptide chain elongation. Its function is as follows. Involved in peptide bond synthesis. Stimulates efficient translation and peptide-bond synthesis on native or reconstituted 70S ribosomes in vitro. Probably functions indirectly by altering the affinity of the ribosome for aminoacyl-tRNA, thus increasing their reactivity as acceptors for peptidyl transferase. This is Elongation factor P from Rhodospirillum rubrum (strain ATCC 11170 / ATH 1.1.1 / DSM 467 / LMG 4362 / NCIMB 8255 / S1).